The primary structure comprises 445 residues: Bifunctional protein GlmU (445 aa).

Residues 1-218 (MRALVLAAGK…LLEITGVNTR (218 aa)) form a pyrophosphorylase region. Residues 6–9 (LAAG), lysine 20, glutamine 69, 74–75 (GT), 96–98 (YGD), glycine 134, glutamate 147, asparagine 162, and asparagine 216 contribute to the UDP-N-acetyl-alpha-D-glucosamine site. Aspartate 98 is a Mg(2+) binding site. Position 216 (asparagine 216) interacts with Mg(2+). A linker region spans residues 219-239 (KTLVWLEEQLRMRKIEELLEN). The N-acetyltransferase stretch occupies residues 240 to 445 (GVTILDPATT…GWVLKKRKEE (206 aa)). UDP-N-acetyl-alpha-D-glucosamine is bound by residues arginine 321 and lysine 339. Histidine 351 (proton acceptor) is an active-site residue. Positions 354 and 365 each coordinate UDP-N-acetyl-alpha-D-glucosamine. Acetyl-CoA contacts are provided by residues alanine 368, 374 to 375 (NY), serine 393, alanine 411, and arginine 428.

The protein in the N-terminal section; belongs to the N-acetylglucosamine-1-phosphate uridyltransferase family. It in the C-terminal section; belongs to the transferase hexapeptide repeat family. As to quaternary structure, homotrimer. It depends on Mg(2+) as a cofactor.

Its subcellular location is the cytoplasm. It catalyses the reaction alpha-D-glucosamine 1-phosphate + acetyl-CoA = N-acetyl-alpha-D-glucosamine 1-phosphate + CoA + H(+). It carries out the reaction N-acetyl-alpha-D-glucosamine 1-phosphate + UTP + H(+) = UDP-N-acetyl-alpha-D-glucosamine + diphosphate. The protein operates within nucleotide-sugar biosynthesis; UDP-N-acetyl-alpha-D-glucosamine biosynthesis; N-acetyl-alpha-D-glucosamine 1-phosphate from alpha-D-glucosamine 6-phosphate (route II): step 2/2. Its pathway is nucleotide-sugar biosynthesis; UDP-N-acetyl-alpha-D-glucosamine biosynthesis; UDP-N-acetyl-alpha-D-glucosamine from N-acetyl-alpha-D-glucosamine 1-phosphate: step 1/1. It participates in bacterial outer membrane biogenesis; LPS lipid A biosynthesis. Its function is as follows. Catalyzes the last two sequential reactions in the de novo biosynthetic pathway for UDP-N-acetylglucosamine (UDP-GlcNAc). The C-terminal domain catalyzes the transfer of acetyl group from acetyl coenzyme A to glucosamine-1-phosphate (GlcN-1-P) to produce N-acetylglucosamine-1-phosphate (GlcNAc-1-P), which is converted into UDP-GlcNAc by the transfer of uridine 5-monophosphate (from uridine 5-triphosphate), a reaction catalyzed by the N-terminal domain. The protein is Bifunctional protein GlmU of Thermotoga sp. (strain RQ2).